The chain runs to 206 residues: Cytochrome c biogenesis ATP-binding export protein CcmA (206 aa).

An ABC transporter domain is found at 3–206; it reads VSVDDLCVTR…LAGASDEAFL (204 aa). Position 35–42 (35–42) interacts with ATP; sequence GPNGSGKT.

It belongs to the ABC transporter superfamily. CcmA exporter (TC 3.A.1.107) family. As to quaternary structure, the complex is composed of two ATP-binding proteins (CcmA) and two transmembrane proteins (CcmB).

It localises to the cell inner membrane. It catalyses the reaction heme b(in) + ATP + H2O = heme b(out) + ADP + phosphate + H(+). In terms of biological role, part of the ABC transporter complex CcmAB involved in the biogenesis of c-type cytochromes; once thought to export heme, this seems not to be the case, but its exact role is uncertain. Responsible for energy coupling to the transport system. This is Cytochrome c biogenesis ATP-binding export protein CcmA from Roseobacter denitrificans (strain ATCC 33942 / OCh 114) (Erythrobacter sp. (strain OCh 114)).